Consider the following 222-residue polypeptide: MRIHDIDPDNRPRERFLRSGKESLSPAELLALILRSGTAGLNIIDTCNKLISEHGLERLADLSIQELQKTPGIGEAKAMQIAAIFELQRRLHFARNMNLKVKGARDVFEYMKGRIPDETKEHLFVLFLSTKNQILRHETITIGTLTASLIHPREIFKAAIRESAHSIILVHNHPSGDVQPSNADKQVTSILKKAGDLLQIELLDHVIVGNNDWFSFRDHALL.

The MPN domain maps to 100 to 222 (KVKGARDVFE…WFSFRDHALL (123 aa)). Zn(2+) is bound by residues His-171, His-173, and Asp-184. The JAMM motif signature appears at 171–184 (HNHPSGDVQPSNAD).

This sequence belongs to the UPF0758 family.

The chain is UPF0758 protein CT0611 from Chlorobaculum tepidum (strain ATCC 49652 / DSM 12025 / NBRC 103806 / TLS) (Chlorobium tepidum).